Consider the following 394-residue polypeptide: MALLETRTEPMVLNMGPHHPSMHGVLRLIVTLDGENVIDCEPVIGYLHRGMEKIAENRSNVMFVPYVSRWDYAAGMFNEAITVNAPEKLANIPVPKRASYIRVIMLELNRIANHLLWLGPFLADVGAQTPFFYIFRERELIYDLWEAATGQRLINNNYFRIGGVAADLPYGWLEKCIDFCDYFQAKVDEYERLITDNPIFRRRVEGIGVISREEALNWSLSGPMLRGSGVKWDLRRVDHYECYDDFDWDVITAEEGDCFARYRVRVQEMRESLKIIRQACAGIPGGPYENLEARRMAEGKKSEWYGPDYQYVSKKVAPTFKIPAGEHYVRLESGKGELGVFIQGADDICPWRFKIRAPDFNNLQILPQLLQGVKVADIMAILGSIDVIMGSVDR.

It belongs to the complex I 49 kDa subunit family. NDH-1 can be composed of about 15 different subunits; different subcomplexes with different compositions have been identified which probably have different functions.

It localises to the cellular thylakoid membrane. It catalyses the reaction a plastoquinone + NADH + (n+1) H(+)(in) = a plastoquinol + NAD(+) + n H(+)(out). The enzyme catalyses a plastoquinone + NADPH + (n+1) H(+)(in) = a plastoquinol + NADP(+) + n H(+)(out). Functionally, NDH-1 shuttles electrons from an unknown electron donor, via FMN and iron-sulfur (Fe-S) centers, to quinones in the respiratory and/or the photosynthetic chain. The immediate electron acceptor for the enzyme in this species is believed to be plastoquinone. Couples the redox reaction to proton translocation, and thus conserves the redox energy in a proton gradient. Cyanobacterial NDH-1 also plays a role in inorganic carbon-concentration. The polypeptide is NAD(P)H-quinone oxidoreductase subunit H (Synechococcus sp. (strain ATCC 27144 / PCC 6301 / SAUG 1402/1) (Anacystis nidulans)).